We begin with the raw amino-acid sequence, 249 residues long: Adapter protein MecA (249 aa).

It belongs to the MecA family. Homodimer.

In terms of biological role, enables the recognition and targeting of unfolded and aggregated proteins to the ClpC protease or to other proteins involved in proteolysis. The polypeptide is Adapter protein MecA (Streptococcus thermophilus (strain ATCC BAA-250 / LMG 18311)).